The sequence spans 239 residues: 4-hydroxy-tetrahydrodipicolinate reductase (239 aa).

NAD(+) contacts are provided by residues 8–13 (GSTGKM), 78–80 (GTT), and 102–105 (SANM). The Proton donor/acceptor role is filled by H134. H135 is a binding site for (S)-2,3,4,5-tetrahydrodipicolinate. K138 acts as the Proton donor in catalysis. Residue 144-145 (GT) participates in (S)-2,3,4,5-tetrahydrodipicolinate binding.

It belongs to the DapB family.

Its subcellular location is the cytoplasm. It carries out the reaction (S)-2,3,4,5-tetrahydrodipicolinate + NAD(+) + H2O = (2S,4S)-4-hydroxy-2,3,4,5-tetrahydrodipicolinate + NADH + H(+). The catalysed reaction is (S)-2,3,4,5-tetrahydrodipicolinate + NADP(+) + H2O = (2S,4S)-4-hydroxy-2,3,4,5-tetrahydrodipicolinate + NADPH + H(+). It functions in the pathway amino-acid biosynthesis; L-lysine biosynthesis via DAP pathway; (S)-tetrahydrodipicolinate from L-aspartate: step 4/4. Catalyzes the conversion of 4-hydroxy-tetrahydrodipicolinate (HTPA) to tetrahydrodipicolinate. This Rickettsia conorii (strain ATCC VR-613 / Malish 7) protein is 4-hydroxy-tetrahydrodipicolinate reductase.